The chain runs to 254 residues: Type III pantothenate kinase (254 aa).

Residue 6–13 (DVGNTNTT) coordinates ATP. Substrate is bound by residues Y100 and 107 to 110 (GADR). D109 functions as the Proton acceptor in the catalytic mechanism. K(+) is bound at residue D129. T132 contributes to the ATP binding site. Position 184 (T184) interacts with substrate.

The protein belongs to the type III pantothenate kinase family. As to quaternary structure, homodimer. The cofactor is NH4(+). K(+) serves as cofactor.

The protein localises to the cytoplasm. The enzyme catalyses (R)-pantothenate + ATP = (R)-4'-phosphopantothenate + ADP + H(+). Its pathway is cofactor biosynthesis; coenzyme A biosynthesis; CoA from (R)-pantothenate: step 1/5. In terms of biological role, catalyzes the phosphorylation of pantothenate (Pan), the first step in CoA biosynthesis. This Anaeromyxobacter dehalogenans (strain 2CP-C) protein is Type III pantothenate kinase.